The following is a 167-amino-acid chain: 2-C-methyl-D-erythritol 2,4-cyclodiphosphate synthase (167 aa).

A divalent metal cation is bound by residues D11 and H13. 4-CDP-2-C-methyl-D-erythritol 2-phosphate is bound by residues 11–13 (DIH) and 37–38 (HS). H45 is a binding site for a divalent metal cation. 4-CDP-2-C-methyl-D-erythritol 2-phosphate-binding positions include 59–61 (DIG), 64–68 (FSDTD), 103–109 (AQAPKMA), and R145.

Belongs to the IspF family. As to quaternary structure, homotrimer. The cofactor is a divalent metal cation.

The catalysed reaction is 4-CDP-2-C-methyl-D-erythritol 2-phosphate = 2-C-methyl-D-erythritol 2,4-cyclic diphosphate + CMP. Its pathway is isoprenoid biosynthesis; isopentenyl diphosphate biosynthesis via DXP pathway; isopentenyl diphosphate from 1-deoxy-D-xylulose 5-phosphate: step 4/6. Involved in the biosynthesis of isopentenyl diphosphate (IPP) and dimethylallyl diphosphate (DMAPP), two major building blocks of isoprenoid compounds. Catalyzes the conversion of 4-diphosphocytidyl-2-C-methyl-D-erythritol 2-phosphate (CDP-ME2P) to 2-C-methyl-D-erythritol 2,4-cyclodiphosphate (ME-CPP) with a corresponding release of cytidine 5-monophosphate (CMP). The polypeptide is 2-C-methyl-D-erythritol 2,4-cyclodiphosphate synthase (Nitrosomonas eutropha (strain DSM 101675 / C91 / Nm57)).